The following is an 817-amino-acid chain: Leucine--tRNA ligase (817 aa).

A 'HIGH' region motif is present at residues 42 to 52 (PYPSGRLHMGH). Residues 576–580 (KMSKS) carry the 'KMSKS' region motif. Residue lysine 579 coordinates ATP.

The protein belongs to the class-I aminoacyl-tRNA synthetase family.

It is found in the cytoplasm. It carries out the reaction tRNA(Leu) + L-leucine + ATP = L-leucyl-tRNA(Leu) + AMP + diphosphate. In Thioalkalivibrio sulfidiphilus (strain HL-EbGR7), this protein is Leucine--tRNA ligase.